The primary structure comprises 114 residues: UPF0102 protein HPAG1_0809 (114 aa).

It belongs to the UPF0102 family.

This is UPF0102 protein HPAG1_0809 from Helicobacter pylori (strain HPAG1).